Consider the following 196-residue polypeptide: Protein hunchback (196 aa).

Disordered stretches follow at residues 16 to 56 (SHHH…SHTN), 63 to 82 (LKQQQQQQQQHQHQQQQQPM), and 156 to 196 (LTPP…KYMA). The span at 17-29 (HHHHHHHAHHSHH) shows a compositional bias: basic residues. Low complexity-rich tracts occupy residues 33–43 (SNSNASNSPHQ) and 65–80 (QQQQQQQQHQHQQQQQ). The segment covering 177 to 196 (EPEKEHDLMSNSSEDMKYMA) has biased composition (basic and acidic residues).

The protein belongs to the hunchback C2H2-type zinc-finger protein family.

It localises to the nucleus. Gap class segmentation protein that controls development of head structures. In Drosophila adunca (Fruit fly), this protein is Protein hunchback (hb).